We begin with the raw amino-acid sequence, 327 residues long: Solute-binding protein SPO1773 (327 aa).

Positions M1–A26 are cleaved as a signal peptide. 3-hydroxybenzoate-binding positions include H39 to W41, R150, R170 to T172, and D211.

This sequence belongs to the bacterial solute-binding protein 7 family. As to quaternary structure, the complex is comprised of an extracytoplasmic solute-binding protein and a heteromeric permease formed by two transmembrane proteins.

It is found in the periplasm. Functionally, solute-binding protein that binds 3,4-dihydroxybenzoate and 3-hydroxybenzoate (in vitro). Probably part of a tripartite ATP-independent periplasmic (TRAP) transport system that mediates solute transport into the cytoplasm. This chain is Solute-binding protein SPO1773, found in Ruegeria pomeroyi (strain ATCC 700808 / DSM 15171 / DSS-3) (Silicibacter pomeroyi).